A 64-amino-acid polypeptide reads, in one-letter code: Large ribosomal subunit protein bL35 (64 aa).

It belongs to the bacterial ribosomal protein bL35 family.

This Wolinella succinogenes (strain ATCC 29543 / DSM 1740 / CCUG 13145 / JCM 31913 / LMG 7466 / NCTC 11488 / FDC 602W) (Vibrio succinogenes) protein is Large ribosomal subunit protein bL35.